We begin with the raw amino-acid sequence, 432 residues long: Glycosyltransferase 6 (432 aa).

Over 1–18 (MGKPGGAKTRTAVCLSDG) the chain is Cytoplasmic. The helical; Signal-anchor for type II membrane protein transmembrane segment at 19-39 (VFFLAGAFMSLTLVWSYFSIF) threads the bilayer. Topologically, residues 40–432 (SPSFTSLRHD…LPFDYPNEAW (393 aa)) are lumenal. Asn-315 carries N-linked (GlcNAc...) asparagine glycosylation.

It belongs to the glycosyltransferase 34 family.

It localises to the golgi apparatus membrane. In terms of biological role, probable glycosyltransferase that may be involved in the biosynthesis of xyloglucan. This Arabidopsis thaliana (Mouse-ear cress) protein is Glycosyltransferase 6 (GT6).